The chain runs to 180 residues: Adenine phosphoribosyltransferase (180 aa).

The protein belongs to the purine/pyrimidine phosphoribosyltransferase family. As to quaternary structure, homodimer.

Its subcellular location is the cytoplasm. The enzyme catalyses AMP + diphosphate = 5-phospho-alpha-D-ribose 1-diphosphate + adenine. Its pathway is purine metabolism; AMP biosynthesis via salvage pathway; AMP from adenine: step 1/1. In terms of biological role, catalyzes a salvage reaction resulting in the formation of AMP, that is energically less costly than de novo synthesis. The protein is Adenine phosphoribosyltransferase of Agrobacterium fabrum (strain C58 / ATCC 33970) (Agrobacterium tumefaciens (strain C58)).